The sequence spans 376 residues: DNA polymerase IV (376 aa).

The region spanning 6 to 187 (IIHIDMDAFF…LSIGKFYGVG (182 aa)) is the UmuC domain. Mg(2+) is bound by residues D10 and D105. E106 is a catalytic residue.

This sequence belongs to the DNA polymerase type-Y family. In terms of assembly, monomer. Mg(2+) serves as cofactor.

The protein localises to the cytoplasm. It carries out the reaction DNA(n) + a 2'-deoxyribonucleoside 5'-triphosphate = DNA(n+1) + diphosphate. Functionally, poorly processive, error-prone DNA polymerase involved in untargeted mutagenesis. Copies undamaged DNA at stalled replication forks, which arise in vivo from mismatched or misaligned primer ends. These misaligned primers can be extended by PolIV. Exhibits no 3'-5' exonuclease (proofreading) activity. May be involved in translesional synthesis, in conjunction with the beta clamp from PolIII. This chain is DNA polymerase IV, found in Desulfotalea psychrophila (strain LSv54 / DSM 12343).